Reading from the N-terminus, the 163-residue chain is Campylobacter invasion antigen D (163 aa).

An MKD motif is present at residues 135–145; sequence KKDDLENRLNL.

Interacts with the host cell protein IQGAP1, thus displacing RACGAP1 from the IQGAP1 complex.

Its subcellular location is the secreted. The protein localises to the host cytoplasm. It localises to the host cytosol. In terms of biological role, effector protein required for the development of acute disease and colon inflammatory lesions. Required for maximal host cell invasion and maximal secretion of the inflammatory chemokine interleukin-8 (IL-8) from host cells. Acts by activating the host MAP kinase signaling pathways ERK-1/2 and p38 to promote both cellular invasion and the release of IL-8. CiaD mediated activation of ERK-1/2 leads to the phosphorylation of host cortactin (CTTN) on serine residues and association of cortactin with N-WASP, promoting actin cytoskeleton rearrangement, membrane ruffling and host cell invasion. In addition, maximal host cell invasion requires interaction with the host cell protein IQGAP1, a Ras GTPase-activating-like protein. Binding to IQGAP1 facilitates the activation of the Rho GTPases RAC1 and CDC42, further promoting actin reorganization and bacterial uptake. CiaD promotes RAC1 activation by excluding RACGAP1 from the IQGAP1 complex, preventing the deactivation of RAC1. CiaD probably activates ERK signaling upstream or independently of IQGAP1. The sequence is that of Campylobacter invasion antigen D from Campylobacter jejuni subsp. jejuni serotype O:2 (strain ATCC 700819 / NCTC 11168).